Here is a 493-residue protein sequence, read N- to C-terminus: Glycerol kinase (493 aa).

ADP is bound at residue Thr-11. The ATP site is built by Thr-11, Thr-12, and Ser-13. A sn-glycerol 3-phosphate-binding site is contributed by Thr-11. An ADP-binding site is contributed by Arg-15. Arg-80, Glu-81, Tyr-132, and Asp-241 together coordinate sn-glycerol 3-phosphate. Glycerol contacts are provided by Arg-80, Glu-81, Tyr-132, Asp-241, and Gln-242. ADP-binding residues include Thr-263 and Gly-306. ATP is bound by residues Thr-263, Gly-306, Gln-310, and Gly-408. An ADP-binding site is contributed by Gly-408.

It belongs to the FGGY kinase family.

It catalyses the reaction glycerol + ATP = sn-glycerol 3-phosphate + ADP + H(+). Its pathway is polyol metabolism; glycerol degradation via glycerol kinase pathway; sn-glycerol 3-phosphate from glycerol: step 1/1. Its activity is regulated as follows. Inhibited by fructose 1,6-bisphosphate (FBP). In terms of biological role, key enzyme in the regulation of glycerol uptake and metabolism. Catalyzes the phosphorylation of glycerol to yield sn-glycerol 3-phosphate. This Cereibacter sphaeroides (strain ATCC 17029 / ATH 2.4.9) (Rhodobacter sphaeroides) protein is Glycerol kinase.